The sequence spans 1084 residues: AP-3 complex subunit beta-1 (1084 aa).

The segment covering 1–11 has biased composition (polar residues); it reads MSSNSFAYNEQ. The tract at residues 1 to 26 is disordered; the sequence is MSSNSFAYNEQSGGGEATELGQEATS. S276 and S609 each carry phosphoserine. Residues 663-800 form a disordered region; it reads AGKAKKENPD…KEKKTKQERN (138 aa). Residues 666-677 show a composition bias toward basic and acidic residues; sequence AKKENPDKKFYS. The segment covering 678 to 717 has biased composition (acidic residues); that stretch reads ESEEEEDSSESSSDSESESGSESGEDEEDDRSGDSAEDSG. Residues 718 to 729 show a composition bias toward low complexity; the sequence is ESGSEPEAGKGR. The segment covering 738 to 753 has biased composition (basic and acidic residues); the sequence is GRGDSKDVDKEKENSK. At S742 the chain carries Phosphoserine. Residues 754-767 show a composition bias toward low complexity; the sequence is TSESSSGESSSIEE. The span at 768–781 shows a compositional bias: acidic residues; sequence SSSDSESESESESE. The span at 782 to 800 shows a compositional bias: basic and acidic residues; it reads SESRKVTKEKEKKTKQERN.

Belongs to the adaptor complexes large subunit family. In terms of assembly, adaptor protein complex 3 (AP-3) is a heterotetramer composed of two large adaptins (delta-type subunit AP3D1 and beta-type subunit AP3B1 or AP3B2), a medium adaptin (mu-type subunit AP3M1 or AP3M2) and a small adaptin (sigma-type subunit APS1 or AP3S2). AP-3 associates with the BLOC-1 complex. Interacts with KIF3A; interaction is direct; interaction is impaired by pyrophosphorylation of AP3B1. In terms of processing, phosphorylated on serine residues. Pyrophosphorylation by 5-diphosphoinositol pentakisphosphate (5-IP7) impairs interaction with KIF3A. Serine pyrophosphorylation is achieved by Mg(2+)-dependent, but enzyme independent transfer of a beta-phosphate from a inositol pyrophosphate to a pre-phosphorylated serine residue.

It is found in the cytoplasmic vesicle. The protein resides in the clathrin-coated vesicle membrane. Its subcellular location is the golgi apparatus. In terms of biological role, subunit of non-clathrin- and clathrin-associated adaptor protein complex 3 (AP-3) that plays a role in protein sorting in the late-Golgi/trans-Golgi network (TGN) and/or endosomes. The AP complexes mediate both the recruitment of clathrin to membranes and the recognition of sorting signals within the cytosolic tails of transmembrane cargo molecules. AP-3 appears to be involved in the sorting of a subset of transmembrane proteins targeted to lysosomes and lysosome-related organelles. In concert with the BLOC-1 complex, AP-3 is required to target cargos into vesicles assembled at cell bodies for delivery into neurites and nerve terminals. In Bos taurus (Bovine), this protein is AP-3 complex subunit beta-1 (AP3B1).